Reading from the N-terminus, the 612-residue chain is Zinc metalloproteinase-disintegrin-like 2d (612 aa).

Positions 1–20 are cleaved as a signal peptide; sequence MIQVLLVTICLAVFPYQGSS. A propeptide spanning residues 21–189 is cleaved from the precursor; it reads IILGSGNVND…KKASQLNLTP (169 aa). One can recognise a Peptidase M12B domain in the interval 199–395; it reads KYIELVIVAD…NRPPCILNKP (197 aa). Glu202 lines the Ca(2+) pocket. Asn218 is a glycosylation site (N-linked (GlcNAc...) asparagine). Residue Asp286 coordinates Ca(2+). 3 disulfides stabilise this stretch: Cys310–Cys390, Cys350–Cys374, and Cys352–Cys357. Zn(2+) is bound at residue His335. Glu336 is a catalytic residue. Residues His339 and His345 each contribute to the Zn(2+) site. The Ca(2+) site is built by Cys390, Asn393, Val405, Asn408, Phe410, Glu412, Glu415, and Asp418. The 87-residue stretch at 403–489 folds into the Disintegrin domain; the sequence is PPVCGNYFVE…DCPTDNFQRN (87 aa). 14 disulfide bridges follow: Cys406/Cys435, Cys417/Cys430, Cys419/Cys425, Cys429/Cys452, Cys443/Cys449, Cys448/Cys474, Cys461/Cys481, Cys468/Cys500, Cys493/Cys505, Cys512/Cys562, Cys527/Cys573, Cys540/Cys550, Cys557/Cys599, and Cys593/Cys605. The D/ECD-tripeptide signature appears at 467 to 469; that stretch reads ECD.

Belongs to the venom metalloproteinase (M12B) family. P-III subfamily. It depends on Zn(2+) as a cofactor. As to expression, expressed by the venom gland.

The protein resides in the secreted. In terms of biological role, snake venom metalloproteinase that impairs hemostasis in the envenomed animal. This is Zinc metalloproteinase-disintegrin-like 2d from Crotalus adamanteus (Eastern diamondback rattlesnake).